Consider the following 37-residue polypeptide: MKIRASVRKICEKCRLIRRRKRLLVICYNPRHKQKQG.

Belongs to the bacterial ribosomal protein bL36 family.

The protein localises to the plastid. Its subcellular location is the chloroplast. The sequence is that of Large ribosomal subunit protein bL36c from Cryptomeria japonica (Japanese cedar).